The primary structure comprises 158 residues: Transcription elongation factor GreA (158 aa).

Residues 10–76 (TLEGKKKLEE…QIEKMIRNAE (67 aa)) are a coiled coil.

Belongs to the GreA/GreB family.

Functionally, necessary for efficient RNA polymerase transcription elongation past template-encoded arresting sites. The arresting sites in DNA have the property of trapping a certain fraction of elongating RNA polymerases that pass through, resulting in locked ternary complexes. Cleavage of the nascent transcript by cleavage factors such as GreA or GreB allows the resumption of elongation from the new 3'terminus. GreA releases sequences of 2 to 3 nucleotides. The sequence is that of Transcription elongation factor GreA from Halalkalibacterium halodurans (strain ATCC BAA-125 / DSM 18197 / FERM 7344 / JCM 9153 / C-125) (Bacillus halodurans).